We begin with the raw amino-acid sequence, 204 residues long: MIGRLQGILLEKQPPEILLNVQGVGYELLLPMTSFYDLPEIGQETTLFTHLVVREDAHLLFGFAQKTDRTLFRELIKTNGVGPKLALAILSAMSVEQFAYAIEREELSKLTKIPGVGKKTAERLLVELKGKFKGVKQSDFFVESTHIPLSPSIESHSESSSDEAISALIALGYKPVEAEKMVKRVAKPELTSEQVIREALKVAL.

Residues 1–64 form a domain I region; it reads MIGRLQGILL…EDAHLLFGFA (64 aa). A domain II region spans residues 65-143; that stretch reads QKTDRTLFRE…GVKQSDFFVE (79 aa). The tract at residues 144–155 is flexible linker; sequence STHIPLSPSIES. Positions 156–204 are domain III; the sequence is HSESSSDEAISALIALGYKPVEAEKMVKRVAKPELTSEQVIREALKVAL.

It belongs to the RuvA family. Homotetramer. Forms an RuvA(8)-RuvB(12)-Holliday junction (HJ) complex. HJ DNA is sandwiched between 2 RuvA tetramers; dsDNA enters through RuvA and exits via RuvB. An RuvB hexamer assembles on each DNA strand where it exits the tetramer. Each RuvB hexamer is contacted by two RuvA subunits (via domain III) on 2 adjacent RuvB subunits; this complex drives branch migration. In the full resolvosome a probable DNA-RuvA(4)-RuvB(12)-RuvC(2) complex forms which resolves the HJ.

Its subcellular location is the cytoplasm. Its function is as follows. The RuvA-RuvB-RuvC complex processes Holliday junction (HJ) DNA during genetic recombination and DNA repair, while the RuvA-RuvB complex plays an important role in the rescue of blocked DNA replication forks via replication fork reversal (RFR). RuvA specifically binds to HJ cruciform DNA, conferring on it an open structure. The RuvB hexamer acts as an ATP-dependent pump, pulling dsDNA into and through the RuvAB complex. HJ branch migration allows RuvC to scan DNA until it finds its consensus sequence, where it cleaves and resolves the cruciform DNA. In Haemophilus influenzae (strain ATCC 51907 / DSM 11121 / KW20 / Rd), this protein is Holliday junction branch migration complex subunit RuvA.